Here is a 68-residue protein sequence, read N- to C-terminus: SERF-like protein YDL085C-A (68 aa).

2 stretches are compositionally biased toward basic and acidic residues: residues 1–43 and 50–68; these read MARG…EILR and DARR…KTRR. The tract at residues 1–68 is disordered; it reads MARGNQRDLA…EKLKAEKTRR (68 aa). Residue Ser-37 is modified to Phosphoserine.

This sequence belongs to the SERF family.

The protein localises to the cytoplasm. Its subcellular location is the nucleus. The chain is SERF-like protein YDL085C-A from Saccharomyces cerevisiae (strain ATCC 204508 / S288c) (Baker's yeast).